We begin with the raw amino-acid sequence, 545 residues long: Chaperonin GroEL 2 (545 aa).

ATP contacts are provided by residues 29 to 32, 86 to 90, G413, 479 to 481, and D495; these read TLGP, DGTTT, and NAA.

This sequence belongs to the chaperonin (HSP60) family. Forms a cylinder of 14 subunits composed of two heptameric rings stacked back-to-back. Interacts with the co-chaperonin GroES.

It localises to the cytoplasm. The catalysed reaction is ATP + H2O + a folded polypeptide = ADP + phosphate + an unfolded polypeptide.. Functionally, together with its co-chaperonin GroES, plays an essential role in assisting protein folding. The GroEL-GroES system forms a nano-cage that allows encapsulation of the non-native substrate proteins and provides a physical environment optimized to promote and accelerate protein folding. The polypeptide is Chaperonin GroEL 2 (Prochlorococcus marinus (strain MIT 9312)).